Reading from the N-terminus, the 398-residue chain is Nonsense-mediated decay protein 4 (398 aa).

The interval 327–355 is disordered; the sequence is PVTSNYRGKNNRGRNNRGRRGNKRRERER. Residues 335–350 show a composition bias toward basic residues; sequence KNNRGRNNRGRRGNKR.

The protein resides in the cytoplasm. Involved in nonsense-mediated decay of mRNAs containing premature stop codons. The sequence is that of Nonsense-mediated decay protein 4 (NMD4) from Candida albicans (strain SC5314 / ATCC MYA-2876) (Yeast).